A 423-amino-acid chain; its full sequence is Glucose-1-phosphate adenylyltransferase (423 aa).

Alpha-D-glucose 1-phosphate contacts are provided by residues Tyr110, Gly175, Glu190–Lys191, and Ser208.

The protein belongs to the bacterial/plant glucose-1-phosphate adenylyltransferase family. In terms of assembly, homotetramer.

It carries out the reaction alpha-D-glucose 1-phosphate + ATP + H(+) = ADP-alpha-D-glucose + diphosphate. It participates in glycan biosynthesis; glycogen biosynthesis. In terms of biological role, involved in the biosynthesis of ADP-glucose, a building block required for the elongation reactions to produce glycogen. Catalyzes the reaction between ATP and alpha-D-glucose 1-phosphate (G1P) to produce pyrophosphate and ADP-Glc. The sequence is that of Glucose-1-phosphate adenylyltransferase from Nitrosococcus oceani (strain ATCC 19707 / BCRC 17464 / JCM 30415 / NCIMB 11848 / C-107).